The following is a 220-amino-acid chain: Glycerol-3-phosphate acyltransferase (220 aa).

6 consecutive transmembrane segments (helical) span residues 11–31 (INVI…GYAL), 70–90 (LLIL…SKLF), 96–116 (LQWM…FLNF), 127–147 (GSVV…WFFV), 153–173 (ISSL…FFVP), and 193–213 (MVLI…NLLA).

Belongs to the PlsY family. In terms of assembly, probably interacts with PlsX.

Its subcellular location is the cell inner membrane. The catalysed reaction is an acyl phosphate + sn-glycerol 3-phosphate = a 1-acyl-sn-glycero-3-phosphate + phosphate. It participates in lipid metabolism; phospholipid metabolism. In terms of biological role, catalyzes the transfer of an acyl group from acyl-phosphate (acyl-PO(4)) to glycerol-3-phosphate (G3P) to form lysophosphatidic acid (LPA). This enzyme utilizes acyl-phosphate as fatty acyl donor, but not acyl-CoA or acyl-ACP. This Helicobacter acinonychis (strain Sheeba) protein is Glycerol-3-phosphate acyltransferase.